The following is a 26-amino-acid chain: Hemocyanin subunit B (26 aa).

This sequence belongs to the tyrosinase family. Hemocyanin subfamily. Hemolymph.

The protein localises to the secreted. It localises to the extracellular space. In terms of biological role, hemocyanins are copper-containing oxygen carriers occurring freely dissolved in the hemolymph of many mollusks and arthropods. This is Hemocyanin subunit B from Carcinus maenas (Common shore crab).